A 260-amino-acid polypeptide reads, in one-letter code: Putative enoyl-CoA hydratase/isomerase YngF (260 aa).

The protein belongs to the enoyl-CoA hydratase/isomerase family.

The sequence is that of Putative enoyl-CoA hydratase/isomerase YngF (yngF) from Bacillus subtilis (strain 168).